Here is a 198-residue protein sequence, read N- to C-terminus: Small ribosomal subunit protein uS7 (198 aa).

It belongs to the universal ribosomal protein uS7 family. In terms of assembly, part of the 30S ribosomal subunit.

In terms of biological role, one of the primary rRNA binding proteins, it binds directly to 16S rRNA where it nucleates assembly of the head domain of the 30S subunit. Is located at the subunit interface close to the decoding center. The sequence is that of Small ribosomal subunit protein uS7 from Desulfurococcus amylolyticus (strain DSM 18924 / JCM 16383 / VKM B-2413 / 1221n) (Desulfurococcus kamchatkensis).